The primary structure comprises 175 residues: ATP-dependent protease subunit HslV (175 aa).

T2 is a catalytic residue. 3 residues coordinate Na(+): G158, C161, and T164.

This sequence belongs to the peptidase T1B family. HslV subfamily. In terms of assembly, a double ring-shaped homohexamer of HslV is capped on each side by a ring-shaped HslU homohexamer. The assembly of the HslU/HslV complex is dependent on binding of ATP.

The protein resides in the cytoplasm. It catalyses the reaction ATP-dependent cleavage of peptide bonds with broad specificity.. With respect to regulation, allosterically activated by HslU binding. Functionally, protease subunit of a proteasome-like degradation complex believed to be a general protein degrading machinery. This Haemophilus influenzae (strain PittGG) protein is ATP-dependent protease subunit HslV.